Here is a 471-residue protein sequence, read N- to C-terminus: Cysteine--tRNA ligase (471 aa).

Cysteine 29 is a Zn(2+) binding site. The short motif at 31–41 is the 'HIGH' region element; that stretch reads PTVYNYIHIGN. Residues cysteine 209, histidine 234, and glutamate 238 each coordinate Zn(2+). A 'KMSKS' region motif is present at residues 266–270; the sequence is KMSKS. Lysine 269 provides a ligand contact to ATP.

This sequence belongs to the class-I aminoacyl-tRNA synthetase family. As to quaternary structure, monomer. Zn(2+) is required as a cofactor.

It is found in the cytoplasm. It catalyses the reaction tRNA(Cys) + L-cysteine + ATP = L-cysteinyl-tRNA(Cys) + AMP + diphosphate. This Listeria monocytogenes serotype 4b (strain CLIP80459) protein is Cysteine--tRNA ligase.